The chain runs to 337 residues: Oligopeptide transport ATP-binding protein OppD (337 aa).

One can recognise an ABC transporter domain in the interval 20–269 (LNVKDLRVTF…PVHPYSIGLL (250 aa)). Residue 56 to 63 (GESGSGKS) participates in ATP binding.

The protein belongs to the ABC transporter superfamily. The complex is composed of two ATP-binding proteins (OppD and OppF), two transmembrane proteins (OppB and OppC) and a solute-binding protein (OppA or MppA).

It localises to the cell inner membrane. It catalyses the reaction a [peptide](out) + ATP + H2O = a [peptide](in) + ADP + phosphate + H(+). It carries out the reaction L-alanyl-gamma-D-glutamyl-meso-2,6-diaminopimelate(out) + ATP + H2O = L-alanyl-gamma-D-glutamyl-meso-2,6-diaminopimelate(in) + ADP + phosphate + H(+). Part of the ABC transporter complex OppABCDF involved in the uptake of oligopeptides and of the ABC transporter complex MppA-OppBCDF involved in the uptake of the cell wall murein tripeptide L-alanyl-gamma-D-glutamyl-meso-diaminopimelate. Probably responsible for energy coupling to the transport system. Plays an important nutritional role and is involved in the recycling of cell wall peptides. This chain is Oligopeptide transport ATP-binding protein OppD (oppD), found in Escherichia coli (strain K12).